The chain runs to 777 residues: Zinc finger protein 786 (777 aa).

Positions 9-80 (LTFEDVAIYF…WGEKKKPDKE (72 aa)) constitute a KRAB domain. Residues 194–216 (NSCPVCRENSWEKNHLVKQQKGH) form a C2H2-type 1; degenerate zinc finger. The segment at 240-262 (ISCLGCGKSFRLKQYLVRHLDIH) adopts a C2H2-type 2 zinc-finger fold. The C2H2-type 3; degenerate zinc-finger motif lies at 268 to 291 (PQCPKCKMCFHHERTLFSHHLKNS). The C2H2-type 4; degenerate zinc finger occupies 420–442 (VFCRKCGQGFTKHCGLTEHTRIL). 11 consecutive C2H2-type zinc fingers follow at residues 448 to 470 (FWCA…QRLH), 476 to 498 (FQCT…QLQH), 504 to 526 (FSCS…LRVH), 532 to 554 (FQCP…QRIH), 560 to 582 (FSCG…FRVH), 588 to 610 (FQCP…QRLH), 616 to 638 (FQCP…QLLH), 644 to 665 (FSCQ…MRTH), 671 to 693 (FQCP…QGLH), 699 to 721 (FHCP…QRIH), and 727 to 749 (FACG…IRVH).

This sequence belongs to the krueppel C2H2-type zinc-finger protein family.

The protein resides in the nucleus. In terms of biological role, may be involved in transcriptional regulation. This chain is Zinc finger protein 786 (Znf786), found in Mus musculus (Mouse).